Reading from the N-terminus, the 445-residue chain is Phosphoglucosamine mutase (445 aa).

Ser104 serves as the catalytic Phosphoserine intermediate. Positions 104, 243, 245, and 247 each coordinate Mg(2+). Ser104 bears the Phosphoserine mark.

This sequence belongs to the phosphohexose mutase family. Mg(2+) is required as a cofactor. In terms of processing, activated by phosphorylation.

It catalyses the reaction alpha-D-glucosamine 1-phosphate = D-glucosamine 6-phosphate. In terms of biological role, catalyzes the conversion of glucosamine-6-phosphate to glucosamine-1-phosphate. This chain is Phosphoglucosamine mutase, found in Neisseria subflava.